The sequence spans 99 residues: Aspartyl/glutamyl-tRNA(Asn/Gln) amidotransferase subunit C (99 aa).

It belongs to the GatC family. Heterotrimer of A, B and C subunits.

It catalyses the reaction L-glutamyl-tRNA(Gln) + L-glutamine + ATP + H2O = L-glutaminyl-tRNA(Gln) + L-glutamate + ADP + phosphate + H(+). The catalysed reaction is L-aspartyl-tRNA(Asn) + L-glutamine + ATP + H2O = L-asparaginyl-tRNA(Asn) + L-glutamate + ADP + phosphate + 2 H(+). In terms of biological role, allows the formation of correctly charged Asn-tRNA(Asn) or Gln-tRNA(Gln) through the transamidation of misacylated Asp-tRNA(Asn) or Glu-tRNA(Gln) in organisms which lack either or both of asparaginyl-tRNA or glutaminyl-tRNA synthetases. The reaction takes place in the presence of glutamine and ATP through an activated phospho-Asp-tRNA(Asn) or phospho-Glu-tRNA(Gln). This Mycobacterium marinum (strain ATCC BAA-535 / M) protein is Aspartyl/glutamyl-tRNA(Asn/Gln) amidotransferase subunit C.